Reading from the N-terminus, the 245-residue chain is Ribonuclease PH (245 aa).

Residues arginine 93 and 131-133 (GTR) each bind phosphate.

This sequence belongs to the RNase PH family. In terms of assembly, homohexameric ring arranged as a trimer of dimers.

The enzyme catalyses tRNA(n+1) + phosphate = tRNA(n) + a ribonucleoside 5'-diphosphate. Functionally, phosphorolytic 3'-5' exoribonuclease that plays an important role in tRNA 3'-end maturation. Removes nucleotide residues following the 3'-CCA terminus of tRNAs; can also add nucleotides to the ends of RNA molecules by using nucleoside diphosphates as substrates, but this may not be physiologically important. Probably plays a role in initiation of 16S rRNA degradation (leading to ribosome degradation) during starvation. This chain is Ribonuclease PH, found in Corynebacterium efficiens (strain DSM 44549 / YS-314 / AJ 12310 / JCM 11189 / NBRC 100395).